Consider the following 422-residue polypeptide: Retinoic acid receptor RXR-beta-B (422 aa).

A modulating region spans residues 1–89 (MNSLPPSTSA…SGPMLSQKRM (89 aa)). 2 NR C4-type zinc fingers span residues 90–110 (CAIC…CEGC) and 126–150 (CRDN…YQKC). The segment at residues 90 to 155 (CAICGDRSSG…RYQKCLAMGM (66 aa)) is a DNA-binding region (nuclear receptor). A hinge region spans residues 156–178 (KREAVQEERQKNKERDGDYECSS). Over residues 161–173 (QEERQKNKERDGD) the composition is skewed to basic and acidic residues. The disordered stretch occupies residues 161–182 (QEERQKNKERDGDYECSSSANE). The 241-residue stretch at 181 to 421 (NEEMPVEKIL…TFLMEMLESP (241 aa)) folds into the NR LBD domain.

Belongs to the nuclear hormone receptor family. NR2 subfamily. Homodimer. Heterodimer; with a rar molecule. Binds DNA preferentially as a rar/rxr heterodimer. Heterodimerizes with rarga. As to expression, shows uniform expression from the blastula to mid-gastrula stages. At 12 hours post-fertilization (hpf), expressed ubiquitously but more weakly. At 24 hpf, restricted to the ventral diencephalon, pharangeal endoderm and trunk and tail mesoderm; mesoderm expression is in medial cells of each somite along the dorsoventral axis, forming stripes. At 48 hpf, expressed in forebrain, eye, midbrain and anterior hindbrain.

Its subcellular location is the nucleus. In terms of biological role, receptor for retinoic acid. Retinoic acid receptors bind as heterodimers to their target response elements in response to their ligands, all-trans or 9-cis retinoic acid, and regulate gene expression in various biological processes. The rar/rxr heterodimers bind to the retinoic acid response elements (RARE) composed of tandem 5'-AGGTCA-3' sites known as DR1-DR5. The high affinity ligand for rxrs is 9-cis retinoic acid. The polypeptide is Retinoic acid receptor RXR-beta-B (rxrbb) (Danio rerio (Zebrafish)).